The chain runs to 65 residues: Putative beta-neurotoxin RjAa2 (65 aa).

Residues 1–64 (KEGYPMGRDG…VWDSSTNKCG (64 aa)) enclose the LCN-type CS-alpha/beta domain. 4 disulfides stabilise this stretch: C11–C63, C15–C37, C22–C44, and C26–C46.

It belongs to the long (4 C-C) scorpion toxin superfamily. Sodium channel inhibitor family. Beta subfamily. As to expression, expressed by the venom gland.

It is found in the secreted. Functionally, beta toxins bind voltage-independently at site-4 of sodium channels (Nav) and shift the voltage of activation toward more negative potentials thereby affecting sodium channel activation and promoting spontaneous and repetitive firing. The polypeptide is Putative beta-neurotoxin RjAa2 (Rhopalurus junceus (Caribbean blue scorpion)).